A 202-amino-acid polypeptide reads, in one-letter code: MSASTSSHRPIKGILKNKSSSGSSVATSGQQSGGTIQDVKRKKSQKWDESSILAAHRATYRDYDLMKANEPGTSYMSVQDNGEDSVRDVEGEDSVRGVEGKEATDASDHSCEVDEQESSEAYMRKILLHKQEKKRQFEMRRRLHYNEELNIKLARQLMWKELQSEDNENEETPQGTNEEKTAAEESEEAPLTGGLQTQSCDP.

Disordered stretches follow at residues 1–51 (MSAS…DESS) and 71–118 (PGTS…EQES). The required for binding PPP1CC stretch occupies residues 12 to 17 (KGILKN). The segment covering 19–35 (SSSGSSVATSGQQSGGT) has biased composition (low complexity). Positions 43–55 (KSQKWDESSILAA) are required for binding PPP1CC. A compositionally biased stretch (polar residues) spans 71-80 (PGTSYMSVQD). A compositionally biased stretch (basic and acidic residues) spans 84-112 (DSVRDVEGEDSVRGVEGKEATDASDHSCE). The segment at 144-147 (HYNE) is required for binding PPP1CC catalytic center, displacing metal ions and inhibition of PPP1CC catalytic activity. Positions 162–202 (LQSEDNENEETPQGTNEEKTAAEESEEAPLTGGLQTQSCDP) are disordered.

Belongs to the protein phosphatase inhibitor 2 family. Detected in sperm (at protein level).

Its function is as follows. Functions as a protein phosphatase inhibitor. It inhibits activity of the catalytic subunit of PP1 and weakly inhibits the activity of myosin-associated phosphates. This is Protein phosphatase inhibitor 2 family member C from Homo sapiens (Human).